The chain runs to 232 residues: Small ribosomal subunit protein uS2 (232 aa).

This sequence belongs to the universal ribosomal protein uS2 family.

The chain is Small ribosomal subunit protein uS2 from Pelotomaculum thermopropionicum (strain DSM 13744 / JCM 10971 / SI).